Consider the following 138-residue polypeptide: Basic phospholipase A2 homolog Ts-K49a (138 aa).

Positions 1-16 (MRTLWIMAVLLLGVEG) are cleaved as a signal peptide. 7 disulfides stabilise this stretch: C42–C131, C44–C60, C59–C111, C65–C138, C66–C104, C73–C97, and C91–C102. The interval 121 to 133 (KKKKINLKLFCKK) is important for membrane-damaging activities in eukaryotes and bacteria; heparin-binding.

Expressed by the venom gland.

It is found in the secreted. Functionally, snake venom phospholipase A2 homolog that lacks catalytic activity. It shows myotoxic and weak anticoagulant activities and induces local edema a few hours after injection (5-10 ug) in the hind paw. A model of myotoxic mechanism has been proposed: an apo Lys49-PLA2 is activated by the entrance of a hydrophobic molecule (e.g. fatty acid) at the hydrophobic channel of the protein leading to a reorientation of a monomer. This reorientation causes a transition between 'inactive' to 'active' states, causing alignment of C-terminal and membrane-docking sites (MDoS) side-by-side and putting the membrane-disruption sites (MDiS) in the same plane, exposed to solvent and in a symmetric position for both monomers. The MDoS region stabilizes the toxin on membrane by the interaction of charged residues with phospholipid head groups. Subsequently, the MDiS region destabilizes the membrane with penetration of hydrophobic residues. This insertion causes a disorganization of the membrane, allowing an uncontrolled influx of ions (i.e. calcium and sodium), and eventually triggering irreversible intracellular alterations and cell death. The polypeptide is Basic phospholipase A2 homolog Ts-K49a (Trimeresurus stejnegeri (Chinese green tree viper)).